A 370-amino-acid polypeptide reads, in one-letter code: 3-isopropylmalate dehydrogenase (370 aa).

Glycine 77–glutamate 90 provides a ligand contact to NAD(+). Positions 97, 107, 135, and 226 each coordinate substrate. Mg(2+)-binding residues include aspartate 226, aspartate 250, and aspartate 254. An NAD(+)-binding site is contributed by glycine 290–asparagine 302.

Belongs to the isocitrate and isopropylmalate dehydrogenases family. LeuB type 1 subfamily. Homodimer. Requires Mg(2+) as cofactor. Mn(2+) serves as cofactor.

The protein localises to the cytoplasm. The enzyme catalyses (2R,3S)-3-isopropylmalate + NAD(+) = 4-methyl-2-oxopentanoate + CO2 + NADH. Its pathway is amino-acid biosynthesis; L-leucine biosynthesis; L-leucine from 3-methyl-2-oxobutanoate: step 3/4. Catalyzes the oxidation of 3-carboxy-2-hydroxy-4-methylpentanoate (3-isopropylmalate) to 3-carboxy-4-methyl-2-oxopentanoate. The product decarboxylates to 4-methyl-2 oxopentanoate. The chain is 3-isopropylmalate dehydrogenase from Rhizobium johnstonii (strain DSM 114642 / LMG 32736 / 3841) (Rhizobium leguminosarum bv. viciae).